An 813-amino-acid chain; its full sequence is Origin of replication complex subunit 1B (813 aa).

The segment at 1 to 109 (MASTPRAKTF…TPKKKKKIDS (109 aa)) is disordered. Residues 11–21 (KSPTKTPSNIY) show a composition bias toward polar residues. Low complexity predominate over residues 27-41 (SPSSTSHTPQTPETH). The span at 43-52 (PLRRSARHVS) shows a compositional bias: basic residues. The short motif at 83–90 (PRKPTTDV) is the Nuclear localization signal element. A histone H3 binding region spans residues 163–187 (DPEIEDCQICFKSDTNIMIECDDCL). A PHD-type zinc finger spans residues 166–215 (IEDCQICFKSDTNIMIECDDCLGGFHLKCLKPPLKEVPEGDWICQFCEVK). Residues C169, C172, C183, C186, H191, and C194 each coordinate Zn(2+). A histone H3 binding region spans residues 203 to 207 (PEGDW). Positions 209 and 212 each coordinate Zn(2+). The 119-residue stretch at 226-344 (PKPPEGKKLA…VHWRSFKRLA (119 aa)) folds into the BAH domain. The interval 319–324 (ASNDGD) is histone H3 binding. A disordered region spans residues 349-372 (GDSDSDQEWNGRKEEEVDDSDEEM). The segment at 436–803 (PKSLPCRSKE…DDVAFALKDN (368 aa)) is necessary and sufficient for ORC complex assembly. 471–479 (GVPGTGKTI) provides a ligand contact to ATP. Residues D561 and E562 each coordinate Mg(2+). ATP is bound by residues E562, N595, and R660.

It belongs to the ORC1 family. As to quaternary structure, component of the origin recognition complex (ORC) composed of at least ORC1 (ORC1A or ORC1B), ORC2, ORC3, ORC4, ORC5 and ORC6. ORC is regulated in a cell-cycle and development dependent manner. It is sequentially assembled at the exit from anaphase of mitosis and disassembled as cells enter S phase. Interacts directly with ORC2 and ORC5. Binds mostly unmodified histone H3, and, with lower efficiency, H3K4me1 H3K4me2 and H3K4me3. In terms of tissue distribution, follow a cell-cycle regulation with a peak at the G1/S-phase. Mostly expressed in flower buds, and, to a lower exent, in roots, leaves and stems.

The protein resides in the nucleus. Functionally, essential protein required for ovules fertilization. Component of the origin recognition complex (ORC) that binds origins of replication. It has a role in both chromosomal replication and mating type transcriptional silencing. Binds to the ARS consensus sequence (ACS) of origins of replication. H3K4me3 effector that positively regulates the transcription of a subset of genes. The chain is Origin of replication complex subunit 1B from Arabidopsis thaliana (Mouse-ear cress).